A 324-amino-acid chain; its full sequence is UDP-N-acetylenolpyruvoylglucosamine reductase (324 aa).

The 168-residue stretch at 36–203 (FRAGGLAELM…THAIFEGFPE (168 aa)) folds into the FAD-binding PCMH-type domain. Residue Arg-183 is part of the active site. Catalysis depends on Ser-232, which acts as the Proton donor. Residue Glu-302 is part of the active site.

This sequence belongs to the MurB family. FAD is required as a cofactor.

Its subcellular location is the cytoplasm. The catalysed reaction is UDP-N-acetyl-alpha-D-muramate + NADP(+) = UDP-N-acetyl-3-O-(1-carboxyvinyl)-alpha-D-glucosamine + NADPH + H(+). It participates in cell wall biogenesis; peptidoglycan biosynthesis. Functionally, cell wall formation. In Sinorhizobium fredii (strain NBRC 101917 / NGR234), this protein is UDP-N-acetylenolpyruvoylglucosamine reductase.